The sequence spans 543 residues: Telomerase Cajal body protein 1 homolog (543 aa).

Positions 95–128 are disordered; it reads GRPKNAVESPHAGVPMETSLAAEEEANGDEEEES. Residues 116–127 show a composition bias toward acidic residues; the sequence is AEEEANGDEEEE. 3 WD repeats span residues 237–283, 291–329, and 378–421; these read PEGG…LRCS, DEVMAAISLAFSHDGEQIYAGYKRCIKIFDTSRPGRFCD, and GHKG…QPLV.

The protein belongs to the TCAB1 family.

The protein resides in the nucleus. It is found in the cajal body. RNA chaperone that plays a key role in Cajal body formation. Specifically recognizes and binds the Cajal body box (CAB box) present in both small Cajal body RNAs (scaRNAs). Probably acts by mediating localization of scaRNAs to Cajal bodies. In Drosophila melanogaster (Fruit fly), this protein is Telomerase Cajal body protein 1 homolog.